A 335-amino-acid chain; its full sequence is DNA-directed RNA polymerase RPB7 homolog (335 aa).

It belongs to the Asfivirus DNA-directed RNA polymerase RPB7 homolog family. In terms of assembly, part of the viral DNA-directed RNA polymerase that consists of 8 polII-like subunits (RPB1, RPB2, RPB3, RPB5, RPB6, RPB7, RPB9, RPB10), a capping enzyme and a termination factor.

The protein resides in the host cytoplasm. Its subcellular location is the virion. Its function is as follows. Component of the DNA-directed RNA polymerase (RNAP) that catalyzes the transcription in the cytoplasm of viral DNA into RNA using the four ribonucleoside triphosphates as substrates. This Ornithodoros (relapsing fever ticks) protein is DNA-directed RNA polymerase RPB7 homolog.